The primary structure comprises 96 residues: Small ribosomal subunit protein bS21 (96 aa).

Basic and acidic residues predominate over residues 37–52 (EKPSEKKAREKAEAVR). Residues 37 to 96 (EKPSEKKAREKAEAVRRARKLARKKLQREGLLPSKPKPVFGADRGRGAAGGAGGAPRPAR) form a disordered region. Over residues 53-62 (RARKLARKKL) the composition is skewed to basic residues.

It belongs to the bacterial ribosomal protein bS21 family.

The polypeptide is Small ribosomal subunit protein bS21 (Afipia carboxidovorans (strain ATCC 49405 / DSM 1227 / KCTC 32145 / OM5) (Oligotropha carboxidovorans)).